We begin with the raw amino-acid sequence, 214 residues long: MVFSTTAALSLLLALSSMQLSEVSEACTCMPNHPQEAFCNSDIVIRAKVVGKKLLKDGPFGTMRYTIKQMKMYRGFSKMQQVQYIYTEAAESLCGVRLQVNKFQYLITGRVFDGEVYTGVCNFIVPWDRLTLSQRKGLNHRYQYGCNCKIKPCYYLPCFVTAKNECFWTDMLSDQGYMGHQAKHYVCIRQKEGYCSWYRGAAPPDKTRINATDP.

Positions 1-26 are cleaved as a signal peptide; sequence MVFSTTAALSLLLALSSMQLSEVSEA. Cysteine 27 contributes to the Zn(2+) binding site. Involved in metalloproteinase-binding regions lie at residues 27–30 and 91–92; these read CTCM and ES. Intrachain disulfides connect cysteine 27-cysteine 94, cysteine 29-cysteine 121, cysteine 39-cysteine 146, cysteine 148-cysteine 195, cysteine 153-cysteine 158, and cysteine 166-cysteine 187. The 120-residue stretch at 27–146 folds into the NTR domain; that stretch reads CTCMPNHPQE…GLNHRYQYGC (120 aa). N-linked (GlcNAc...) asparagine glycosylation occurs at asparagine 210.

The protein belongs to the protease inhibitor I35 (TIMP) family. As to expression, expressed abundantly in brain and cartilage.

It localises to the secreted. The protein localises to the extracellular space. Its subcellular location is the extracellular matrix. Its function is as follows. Complexes with metalloproteinases (such as collagenases) and irreversibly inactivates them by binding to their catalytic zinc cofactor. May form part of a tissue-specific acute response to remodeling stimuli. The chain is Metalloproteinase inhibitor 3 (TIMP3) from Scyliorhinus torazame (Cloudy catshark).